Here is a 1870-residue protein sequence, read N- to C-terminus: Non-reducing polyketide synthase pkgA (1870 aa).

Residues 40–279 (IQDLIRRLHR…SRHSALPISG (240 aa)) are N-terminal acylcarrier protein transacylase domain (SAT). One can recognise a Ketosynthase family 3 (KS3) domain in the interval 416–838 (DAKLAVVGMA…GGNTTLLLED (423 aa)). The tract at residues 453–492 (PPDRFDLDAHFDPSGEKENTTTKGSQSNRPLSRQAEQTDP) is disordered. Basic and acidic residues predominate over residues 455–472 (DRFDLDAHFDPSGEKENT). A compositionally biased stretch (polar residues) spans 473-492 (TTKGSQSNRPLSRQAEQTDP). Catalysis depends on for beta-ketoacyl synthase activity residues Cys577, His712, and His755. The interval 947–1282 (AFSGQGCLYH…QSFASLRRGD (336 aa)) is malonyl-CoA:ACP transacylase (MAT) domain. The interval 1004–1027 (RCPHRESTPSSDASHDSNTNRTST) is disordered. A compositionally biased stretch (polar residues) spans 1011–1027 (TPSSDASHDSNTNRTST). Residues 1364–1704 (TSSVQQIIFE…PRALMPVLFP (341 aa)) are product template (PT) domain. The segment at 1368–1502 (QQIIFEEYDE…ATVCYEEAQD (135 aa)) is N-terminal hotdog fold. A PKS/mFAS DH domain is found at 1368–1700 (QQIIFEEYDE…FKAVPRALMP (333 aa)). The active-site Proton acceptor; for dehydratase activity is His1400. A C-terminal hotdog fold region spans residues 1538 to 1700 (KGGPRVNNFF…FKAVPRALMP (163 aa)). Catalysis depends on Asp1602, which acts as the Proton donor; for dehydratase activity. The Carrier domain occupies 1795-1870 (QSQNAQATAC…VQDLVTWLSK (76 aa)). The residue at position 1832 (Ser1832) is an O-(pantetheine 4'-phosphoryl)serine.

It depends on pantetheine 4'-phosphate as a cofactor.

It carries out the reaction holo-[ACP] + 6 malonyl-CoA + acetyl-CoA + 6 H(+) = 3,5,7,9,11,13-hexaoxotetradecanoyl-[ACP] + 6 CO2 + 7 CoA. It catalyses the reaction holo-[ACP] + 5 malonyl-CoA + acetyl-CoA + 5 H(+) = 3,5,7,9,11-pentaoxododecanoyl-[ACP] + 5 CO2 + 6 CoA. Its pathway is secondary metabolite biosynthesis. Its function is as follows. Non-reducing polyketide synthase; part of the pkg gene cluster that mediates the biosynthesis of dihydrocitreoisocoumarin and 6,8-dihydroxy-3-(2-oxopropyl)-isocoumarin. The non-reducing polyketide synthase pkgA performs the condensation of one acetyl-CoA starter unit with 6 and 5 malonyl-CoA units, respectively. As pkgA lacks a releasing domain, the thioesterase pkgB is necessary to break the thioester bond and release dihydrocitreoisocoumarin and 6,8-dihydroxy-3-(2-oxopropyl)-isocoumarin from pkgA. This is Non-reducing polyketide synthase pkgA from Emericella nidulans (strain FGSC A4 / ATCC 38163 / CBS 112.46 / NRRL 194 / M139) (Aspergillus nidulans).